A 277-amino-acid polypeptide reads, in one-letter code: Glutamate racemase (277 aa).

Substrate contacts are provided by residues 16–17 and 48–49; these read DS and YG. The Proton donor/acceptor role is filled by Cys79. Residue 80-81 participates in substrate binding; that stretch reads NT. Cys191 (proton donor/acceptor) is an active-site residue. A substrate-binding site is contributed by 192-193; sequence TH.

This sequence belongs to the aspartate/glutamate racemases family.

The catalysed reaction is L-glutamate = D-glutamate. It participates in cell wall biogenesis; peptidoglycan biosynthesis. Provides the (R)-glutamate required for cell wall biosynthesis. This Symbiobacterium thermophilum (strain DSM 24528 / JCM 14929 / IAM 14863 / T) protein is Glutamate racemase.